Here is a 544-residue protein sequence, read N- to C-terminus: Elongator complex protein 3 (544 aa).

Positions R79–P369 constitute a Radical SAM core domain. The [4Fe-4S] cluster site is built by C96, C106, and C109. Residues K161, E472–V475, F495–T497, and Y528 each bind acetyl-CoA. Positions T393–L544 constitute an N-acetyltransferase domain.

This sequence belongs to the ELP3 family. As to quaternary structure, component of the elongator complex. [4Fe-4S] cluster serves as cofactor.

It is found in the cytoplasm. The enzyme catalyses uridine(34) in tRNA + acetyl-CoA + S-adenosyl-L-methionine + H2O = 5-(carboxymethyl)uridine(34) in tRNA + 5'-deoxyadenosine + L-methionine + CoA + 2 H(+). Its pathway is tRNA modification; 5-methoxycarbonylmethyl-2-thiouridine-tRNA biosynthesis. Functionally, catalytic tRNA acetyltransferase subunit of the elongator complex which is required for multiple tRNA modifications, including mcm5U (5-methoxycarbonylmethyl uridine), mcm5s2U (5-methoxycarbonylmethyl-2-thiouridine), and ncm5U (5-carbamoylmethyl uridine). In the elongator complex, acts as a tRNA uridine(34) acetyltransferase, which mediates formation of carboxymethyluridine in the wobble base at position 34 in tRNAs. This Schizosaccharomyces pombe (strain 972 / ATCC 24843) (Fission yeast) protein is Elongator complex protein 3.